Consider the following 378-residue polypeptide: UPF0754 membrane protein BcerKBAB4_0766 (378 aa).

The next 2 membrane-spanning stretches (helical) occupy residues 1–21 (MNIWLNMLITTGLGAIIGGYT) and 357–377 (YLGALLGGTIGFIQGLLLLFL).

This sequence belongs to the UPF0754 family.

Its subcellular location is the cell membrane. The chain is UPF0754 membrane protein BcerKBAB4_0766 from Bacillus mycoides (strain KBAB4) (Bacillus weihenstephanensis).